A 389-amino-acid polypeptide reads, in one-letter code: Tryptophan synthase beta chain 1 (389 aa).

Lysine 84 is modified (N6-(pyridoxal phosphate)lysine).

Belongs to the TrpB family. As to quaternary structure, tetramer of two alpha and two beta chains. Requires pyridoxal 5'-phosphate as cofactor.

The protein localises to the plastid. It is found in the chloroplast. The enzyme catalyses (1S,2R)-1-C-(indol-3-yl)glycerol 3-phosphate + L-serine = D-glyceraldehyde 3-phosphate + L-tryptophan + H2O. Its pathway is amino-acid biosynthesis; L-tryptophan biosynthesis; L-tryptophan from chorismate: step 5/5. The beta subunit is responsible for the synthesis of L-tryptophan from indole and L-serine. The polypeptide is Tryptophan synthase beta chain 1 (TSB1) (Zea mays (Maize)).